The primary structure comprises 181 residues: Large ribosomal subunit protein uL5 (181 aa).

Belongs to the universal ribosomal protein uL5 family. As to quaternary structure, part of the 50S ribosomal subunit; part of the 5S rRNA/L5/L18/L25 subcomplex. Contacts the 5S rRNA and the P site tRNA. Forms a bridge to the 30S subunit in the 70S ribosome.

In terms of biological role, this is one of the proteins that bind and probably mediate the attachment of the 5S RNA into the large ribosomal subunit, where it forms part of the central protuberance. In the 70S ribosome it contacts protein S13 of the 30S subunit (bridge B1b), connecting the 2 subunits; this bridge is implicated in subunit movement. Contacts the P site tRNA; the 5S rRNA and some of its associated proteins might help stabilize positioning of ribosome-bound tRNAs. The sequence is that of Large ribosomal subunit protein uL5 from Mesomycoplasma hyopneumoniae (strain 7448) (Mycoplasma hyopneumoniae).